Here is a 170-residue protein sequence, read N- to C-terminus: Acireductone dioxygenase (170 aa).

The Fe(2+) site is built by H99, H101, E105, and H144. Ni(2+) contacts are provided by H99, H101, E105, and H144.

The protein belongs to the acireductone dioxygenase (ARD) family. In terms of assembly, monomer. It depends on Fe(2+) as a cofactor. Requires Ni(2+) as cofactor.

It catalyses the reaction 1,2-dihydroxy-5-(methylsulfanyl)pent-1-en-3-one + O2 = 3-(methylsulfanyl)propanoate + CO + formate + 2 H(+). The enzyme catalyses 1,2-dihydroxy-5-(methylsulfanyl)pent-1-en-3-one + O2 = 4-methylsulfanyl-2-oxobutanoate + formate + 2 H(+). Its pathway is amino-acid biosynthesis; L-methionine biosynthesis via salvage pathway; L-methionine from S-methyl-5-thio-alpha-D-ribose 1-phosphate: step 5/6. Functionally, catalyzes 2 different reactions between oxygen and the acireductone 1,2-dihydroxy-3-keto-5-methylthiopentene (DHK-MTPene) depending upon the metal bound in the active site. Fe-containing acireductone dioxygenase (Fe-ARD) produces formate and 2-keto-4-methylthiobutyrate (KMTB), the alpha-ketoacid precursor of methionine in the methionine recycle pathway. Ni-containing acireductone dioxygenase (Ni-ARD) produces methylthiopropionate, carbon monoxide and formate, and does not lie on the methionine recycle pathway. The chain is Acireductone dioxygenase from Bacillus cereus (strain ATCC 14579 / DSM 31 / CCUG 7414 / JCM 2152 / NBRC 15305 / NCIMB 9373 / NCTC 2599 / NRRL B-3711).